Consider the following 141-residue polypeptide: Hemoglobin subunit alpha-D (141 aa).

Positions 1–141 constitute a Globin domain; the sequence is VLTAEDRRLL…VADVLCEKYR (141 aa). Positions 58 and 87 each coordinate heme b.

This sequence belongs to the globin family. Heterotetramer of two alpha chains and two beta chains. As to expression, red blood cells.

Involved in oxygen transport from the lung to the various peripheral tissues. This Drymarchon melanurus erebennus (Texas indigo snake) protein is Hemoglobin subunit alpha-D.